The primary structure comprises 160 residues: Endoribonuclease YbeY (160 aa).

3 residues coordinate Zn(2+): His-112, His-116, and His-122. The interval 141–160 is disordered; the sequence is ELGHPDPYACDDEEPPSKEK.

It belongs to the endoribonuclease YbeY family. Zn(2+) is required as a cofactor.

Its subcellular location is the cytoplasm. Single strand-specific metallo-endoribonuclease involved in late-stage 70S ribosome quality control and in maturation of the 3' terminus of the 16S rRNA. In Pseudomonas aeruginosa (strain UCBPP-PA14), this protein is Endoribonuclease YbeY.